The following is a 469-amino-acid chain: UDP-glycosyltransferase 75B1 (469 aa).

H16 serves as the catalytic Proton acceptor. H16 is an an anthocyanidin binding site. Q334, H349, W352, S354, E357, D373, and Q374 together coordinate UDP-alpha-D-glucose.

This sequence belongs to the UDP-glycosyltransferase family. In terms of assembly, interacts with CALS1, ROP1 and phragmoplastin.

It is found in the cytoplasm. Its subcellular location is the perinuclear region. It localises to the cytoskeleton. The protein resides in the phragmoplast. The enzyme catalyses (indol-3-yl)acetate + UDP-alpha-D-glucose = 1-O-(indol-3-ylacetyl)-beta-D-glucose + UDP. The protein operates within plant hormone metabolism; auxin conjugation. Possesses low catalytic activity on indole-3-acetic acid (IAA) in vitro. May transfer UDP-glucose from sucrose synthase to callose synthase for the synthesis of callose at the forming cell plate during cytokinesis. Has high affinity for 4-aminobenzoate. Catalyzes the formation of 4-aminobenzoate glucose ester which represents a storage form of 4-aminobenzoate in the vacuole. Is the major source of this activity in the plant. Also active in vitro on benzoates and benzoate derivatives. The polypeptide is UDP-glycosyltransferase 75B1 (UGT75B1) (Arabidopsis thaliana (Mouse-ear cress)).